A 359-amino-acid polypeptide reads, in one-letter code: Pyruvate dehydrogenase E1 component subunit beta, mitochondrial (359 aa).

The N-terminal 19 residues, 1 to 19 (MLGVIRNKTIRPSFSAFRF), are a transit peptide targeting the mitochondrion. E82 contacts thiamine diphosphate. The K(+) site is built by I135, A183, I184, and D186.

Tetramer of 2 alpha and 2 beta subunits. Thiamine diphosphate serves as cofactor.

Its subcellular location is the mitochondrion matrix. It carries out the reaction N(6)-[(R)-lipoyl]-L-lysyl-[protein] + pyruvate + H(+) = N(6)-[(R)-S(8)-acetyldihydrolipoyl]-L-lysyl-[protein] + CO2. In terms of biological role, the pyruvate dehydrogenase complex catalyzes the overall conversion of pyruvate to acetyl-CoA and CO(2). It contains multiple copies of three enzymatic components: pyruvate dehydrogenase (E1), dihydrolipoamide acetyltransferase (E2) and lipoamide dehydrogenase (E3). This Pisum sativum (Garden pea) protein is Pyruvate dehydrogenase E1 component subunit beta, mitochondrial.